Consider the following 421-residue polypeptide: Phosphatidate cytidylyltransferase 1 (421 aa).

Met1 carries the post-translational modification N-acetylmethionine. Over residues 1-12 (MEEENVTSSPST) the composition is skewed to polar residues. Positions 1-26 (MEEENVTSSPSTPVHRLRHRRRSNEV) are disordered. 8 consecutive transmembrane segments (helical) span residues 60–80 (IGGF…MVVV), 102–122 (LPYI…FVYG), 149–169 (YHMA…ILTL), 183–203 (WTHM…ANIF), 206–226 (IFWF…AYIF), 246–266 (GFIG…NILG), 321–341 (LCLG…ASGF), and 369–389 (VMAV…SVSV).

This sequence belongs to the CDS family. It depends on Mg(2+) as a cofactor.

Its subcellular location is the membrane. The enzyme catalyses a 1,2-diacyl-sn-glycero-3-phosphate + CTP + H(+) = a CDP-1,2-diacyl-sn-glycerol + diphosphate. It functions in the pathway phospholipid metabolism; CDP-diacylglycerol biosynthesis; CDP-diacylglycerol from sn-glycerol 3-phosphate: step 3/3. Its function is as follows. May be involved in the synthesis of minor phospholipids and in modulation of IP3-mediated signal transduction. The sequence is that of Phosphatidate cytidylyltransferase 1 from Arabidopsis thaliana (Mouse-ear cress).